The chain runs to 190 residues: UPF0200 protein MTH_434 (190 aa).

Position 10–17 (10–17 (GMPGAGKG)) interacts with ATP.

Belongs to the UPF0200 family.

The protein is UPF0200 protein MTH_434 of Methanothermobacter thermautotrophicus (strain ATCC 29096 / DSM 1053 / JCM 10044 / NBRC 100330 / Delta H) (Methanobacterium thermoautotrophicum).